The following is a 208-amino-acid chain: Large ribosomal subunit protein uL4 (208 aa).

The segment at 44–76 is disordered; sequence RRQGTQSTKTKSEVRGGGRKPWRQKGTGRARHG. Basic residues predominate over residues 60 to 76; the sequence is GGRKPWRQKGTGRARHG.

This sequence belongs to the universal ribosomal protein uL4 family. In terms of assembly, part of the 50S ribosomal subunit.

Functionally, one of the primary rRNA binding proteins, this protein initially binds near the 5'-end of the 23S rRNA. It is important during the early stages of 50S assembly. It makes multiple contacts with different domains of the 23S rRNA in the assembled 50S subunit and ribosome. Its function is as follows. Forms part of the polypeptide exit tunnel. This Acetivibrio thermocellus (strain ATCC 27405 / DSM 1237 / JCM 9322 / NBRC 103400 / NCIMB 10682 / NRRL B-4536 / VPI 7372) (Clostridium thermocellum) protein is Large ribosomal subunit protein uL4.